A 66-amino-acid chain; its full sequence is Clarkitoxin-I-Mdum (66 aa).

4 disulfide bridges follow: C3–C24, C17–C42, C46–C59, and C60–C65.

Expressed by the venom gland.

It localises to the secreted. No toxicity is observed upon intravenous or intracerebroventricular injection into mice. Has no cytotoxic activity towards C2C12 cells at 100 ug/ml. This Micrurus dumerilii (Coral snake) protein is Clarkitoxin-I-Mdum.